A 335-amino-acid chain; its full sequence is S-adenosylmethionine decarboxylase proenzyme (335 aa).

Catalysis depends on residues Glu-12 and Glu-15. Ser-70 functions as the Schiff-base intermediate with substrate; via pyruvic acid in the catalytic mechanism. The residue at position 70 (Ser-70) is a Pyruvic acid (Ser); by autocatalysis. The Proton donor; for catalytic activity role is filled by Cys-84. Active-site proton acceptor; for processing activity residues include Ser-231 and His-245.

It belongs to the eukaryotic AdoMetDC family. Pyruvate serves as cofactor. In terms of processing, is synthesized initially as an inactive proenzyme. Formation of the active enzyme involves a self-maturation process in which the active site pyruvoyl group is generated from an internal serine residue via an autocatalytic post-translational modification. Two non-identical subunits are generated from the proenzyme in this reaction, and the pyruvate is formed at the N-terminus of the alpha chain, which is derived from the carboxyl end of the proenzyme. The post-translation cleavage follows an unusual pathway, termed non-hydrolytic serinolysis, in which the side chain hydroxyl group of the serine supplies its oxygen atom to form the C-terminus of the beta chain, while the remainder of the serine residue undergoes an oxidative deamination to produce ammonia and the pyruvoyl group blocking the N-terminus of the alpha chain.

It carries out the reaction S-adenosyl-L-methionine + H(+) = S-adenosyl 3-(methylsulfanyl)propylamine + CO2. It participates in amine and polyamine biosynthesis; S-adenosylmethioninamine biosynthesis; S-adenosylmethioninamine from S-adenosyl-L-methionine: step 1/1. Functionally, essential for biosynthesis of the polyamines spermidine and spermine. Promotes maintenance and self-renewal of embryonic stem cells, by maintaining spermine levels. The protein is S-adenosylmethionine decarboxylase proenzyme (amd1) of Xenopus laevis (African clawed frog).